Reading from the N-terminus, the 101-residue chain is Small ribosomal subunit protein uS14 (101 aa).

The protein belongs to the universal ribosomal protein uS14 family. In terms of assembly, part of the 30S ribosomal subunit. Contacts proteins S3 and S10.

Binds 16S rRNA, required for the assembly of 30S particles and may also be responsible for determining the conformation of the 16S rRNA at the A site. This chain is Small ribosomal subunit protein uS14, found in Chlamydia caviae (strain ATCC VR-813 / DSM 19441 / 03DC25 / GPIC) (Chlamydophila caviae).